The chain runs to 463 residues: Serine/threonine-protein kinase sgk-1 (463 aa).

Residues Phe-135–Phe-392 enclose the Protein kinase domain. ATP contacts are provided by residues Ile-141–Val-149 and Lys-164. Residue Asp-259 is the Proton acceptor of the active site. Positions Leu-393–Val-463 constitute an AGC-kinase C-terminal domain.

It belongs to the protein kinase superfamily. AGC Ser/Thr protein kinase family. In terms of assembly, interacts with pdk-1, akt-1, akt-2 and daf-16. Part of a complex containing sgk-1, akt-1 and akt-2. Interacts with let-92 phosphatase regulatory subunit pptr-1. The cofactor is Mg(2+). As to expression, expressed in late embryos just before hatching. At postembryonic stages, expressed in sensory and motor neurons and in the intestine. Highly expressed in the intestine and head and tail neurons.

Its subcellular location is the cytoplasm. It is found in the nucleus. The protein resides in the apical cell membrane. The catalysed reaction is L-seryl-[protein] + ATP = O-phospho-L-seryl-[protein] + ADP + H(+). The enzyme catalyses L-threonyl-[protein] + ATP = O-phospho-L-threonyl-[protein] + ADP + H(+). Its activity is regulated as follows. Phosphorylated and activated by pdk-1. In terms of biological role, acts downstream of PI3 kinase age-1 and kinase pdk-1 in the daf-2/insulin receptor-like transduction pathway. Essential role in regulating development, stress response, and longevity. Phosphorylates Forkhead-related daf-16 and the longevity-promoting skn-1 transcription factors, which inhibits their entry into the nucleus and antagonizes their function. Promotes the cytoplasmic localization of the transcription factor pqm-1. Plays a role in the intracellular trafficking of proteins such as mig-14 to the cell membrane, and this may be through positively regulating ceramide synthesis. Acts downstream of rict-1 to regulate fat storage, size, development and vitellogenesis. Downstream of age-1 and together with akt-1/2, promotes cell survival during embryonic development. Plays a role in maintaining the gonadal basement membrane through antagonizing akt-1 activity. Does not appear to play a role in immune function. In Caenorhabditis elegans, this protein is Serine/threonine-protein kinase sgk-1.